The primary structure comprises 716 residues: Fatty acid oxidation complex subunit alpha (716 aa).

Positions 1 to 189 (MIYQSPTIQV…KVGAVDSVVA (189 aa)) are enoyl-CoA hydratase/isomerase. Asp296 contributes to the substrate binding site. The tract at residues 311 to 716 (KEVNNAAVLG…AANNGSYYQA (406 aa)) is 3-hydroxyacyl-CoA dehydrogenase. Residues Met324, Asp343, 400-402 (VVE), Lys407, and Ser429 contribute to the NAD(+) site. The For 3-hydroxyacyl-CoA dehydrogenase activity role is filled by His450. Residue Asn453 coordinates NAD(+). Positions 500 and 660 each coordinate substrate.

The protein in the N-terminal section; belongs to the enoyl-CoA hydratase/isomerase family. In the C-terminal section; belongs to the 3-hydroxyacyl-CoA dehydrogenase family. In terms of assembly, heterotetramer of two alpha chains (FadB) and two beta chains (FadA).

It carries out the reaction a (3S)-3-hydroxyacyl-CoA + NAD(+) = a 3-oxoacyl-CoA + NADH + H(+). The catalysed reaction is a (3S)-3-hydroxyacyl-CoA = a (2E)-enoyl-CoA + H2O. It catalyses the reaction a 4-saturated-(3S)-3-hydroxyacyl-CoA = a (3E)-enoyl-CoA + H2O. The enzyme catalyses (3S)-3-hydroxybutanoyl-CoA = (3R)-3-hydroxybutanoyl-CoA. It carries out the reaction a (3Z)-enoyl-CoA = a 4-saturated (2E)-enoyl-CoA. The catalysed reaction is a (3E)-enoyl-CoA = a 4-saturated (2E)-enoyl-CoA. It participates in lipid metabolism; fatty acid beta-oxidation. Its function is as follows. Involved in the aerobic and anaerobic degradation of long-chain fatty acids via beta-oxidation cycle. Catalyzes the formation of 3-oxoacyl-CoA from enoyl-CoA via L-3-hydroxyacyl-CoA. It can also use D-3-hydroxyacyl-CoA and cis-3-enoyl-CoA as substrate. This is Fatty acid oxidation complex subunit alpha from Shewanella baltica (strain OS185).